A 697-amino-acid chain; its full sequence is UBA domain-containing protein 7 (697 aa).

The disordered stretch occupies residues 1–94; that stretch reads MDDLLDFNFY…STPKSSNYDP (94 aa). The span at 13 to 32 shows a compositional bias: low complexity; sequence STPSNQNNYSNNNSRTPSYS. Over residues 62-77 the composition is skewed to basic and acidic residues; the sequence is KKTDNKISLKELERQK. The segment covering 81-92 has biased composition (polar residues); it reads PDSNSTPKSSNY. The UBA domain occupies 181 to 221; the sequence is KLSSNEMYEKLRDLGFSDDQSRLALENSGSLEDAIEYILEK. A disordered region spans residues 306–346; sequence PEILPKTPIPKRKPHKVPMNEKVSEDRITTNQSRSGNDESS. The span at 323-333 shows a compositional bias: basic and acidic residues; that stretch reads PMNEKVSEDRI. Residues 334–345 are compositionally biased toward polar residues; the sequence is TTNQSRSGNDES. A TPR repeat occupies 412–445; it reads VEEQQSTGNELFRKGDFSQAIEEFTNSLSQLPAK. The interval 547 to 573 is disordered; it reads ISSHSSESHSKRTTQQPKSTPNHTNIK. Positions 559 to 573 are enriched in polar residues; the sequence is TTQQPKSTPNHTNIK. A J domain is found at 633 to 696; it reads CRWQKVSLSE…AWELFKQQND (64 aa).

The polypeptide is UBA domain-containing protein 7 (ucp7) (Schizosaccharomyces pombe (strain 972 / ATCC 24843) (Fission yeast)).